Here is a 142-residue protein sequence, read N- to C-terminus: Large ribosomal subunit protein uL11 (142 aa).

The protein belongs to the universal ribosomal protein uL11 family. As to quaternary structure, part of the ribosomal stalk of the 50S ribosomal subunit. Interacts with L10 and the large rRNA to form the base of the stalk. L10 forms an elongated spine to which L12 dimers bind in a sequential fashion forming a multimeric L10(L12)X complex. One or more lysine residues are methylated.

In terms of biological role, forms part of the ribosomal stalk which helps the ribosome interact with GTP-bound translation factors. The chain is Large ribosomal subunit protein uL11 from Xanthomonas axonopodis pv. citri (strain 306).